The following is a 289-amino-acid chain: ATP synthase gamma chain (289 aa).

This sequence belongs to the ATPase gamma chain family. In terms of assembly, F-type ATPases have 2 components, CF(1) - the catalytic core - and CF(0) - the membrane proton channel. CF(1) has five subunits: alpha(3), beta(3), gamma(1), delta(1), epsilon(1). CF(0) has three main subunits: a, b and c.

Its subcellular location is the cell membrane. Produces ATP from ADP in the presence of a proton gradient across the membrane. The gamma chain is believed to be important in regulating ATPase activity and the flow of protons through the CF(0) complex. The polypeptide is ATP synthase gamma chain (Lactococcus lactis subsp. lactis (strain IL1403) (Streptococcus lactis)).